The chain runs to 563 residues: Probable ganciclovir kinase (563 aa).

The span at 1–16 (MDNGVETPQGQKTQPI) shows a compositional bias: polar residues. The interval 1–33 (MDNGVETPQGQKTQPINLPPDRKRLRKHDGLGK) is disordered. ATP contacts are provided by residues 202-210 (LGVGAYGKV) and Lys219. Asp314 serves as the catalytic Proton acceptor.

The protein belongs to the protein kinase superfamily. Tyr protein kinase family. HCMV ganciclovir subfamily.

Phosphorylates the antiviral nucleoside analog ganciclovir. The chain is Probable ganciclovir kinase (U69) from Human herpesvirus 6B (strain Z29) (HHV-6 variant B).